Reading from the N-terminus, the 891-residue chain is DNA mismatch repair protein MutS (891 aa).

634 to 641 serves as a coordination point for ATP; it reads GPNMGGKS.

Belongs to the DNA mismatch repair MutS family.

In terms of biological role, this protein is involved in the repair of mismatches in DNA. It is possible that it carries out the mismatch recognition step. This protein has a weak ATPase activity. The protein is DNA mismatch repair protein MutS of Burkholderia mallei (strain NCTC 10247).